A 65-amino-acid polypeptide reads, in one-letter code: Large ribosomal subunit protein bL35 (65 aa).

Residues 1-28 form a disordered region; the sequence is MPKLKTRKAAARRFKATGSGKIKRRKAF.

The protein belongs to the bacterial ribosomal protein bL35 family.

This Trichodesmium erythraeum (strain IMS101) protein is Large ribosomal subunit protein bL35.